The following is a 796-amino-acid chain: Quinoprotein glucose dehydrogenase (796 aa).

Over Met-1–Arg-10 the chain is Cytoplasmic. Residues Leu-11–Ile-37 form a helical membrane-spanning segment. Residues Gly-38–Ser-40 lie on the Periplasmic side of the membrane. The chain crosses the membrane as a helical span at residues Trp-41–Trp-58. At Arg-59–Arg-62 the chain is on the cytoplasmic side. Residues Ala-63 to Trp-81 traverse the membrane as a helical segment. The Periplasmic segment spans residues Glu-82–Asp-95. A helical membrane pass occupies residues Ile-96 to Trp-110. Residues Arg-111–Ser-118 are Cytoplasmic-facing. The helical transmembrane segment at Gly-119–Asn-141 threads the bilayer. The Periplasmic portion of the chain corresponds to Asp-142 to Lys-796. Asp-466 acts as the Proton acceptor in catalysis.

It belongs to the bacterial PQQ dehydrogenase family. As to quaternary structure, monomer. Pyrroloquinoline quinone serves as cofactor.

Its subcellular location is the cell inner membrane. The catalysed reaction is a ubiquinone + D-glucose = D-glucono-1,5-lactone + a ubiquinol. Its function is as follows. GDH is probably involved in energy conservation rather than in sugar metabolism. This is Quinoprotein glucose dehydrogenase (gcd) from Escherichia coli (strain K12).